A 66-amino-acid polypeptide reads, in one-letter code: Large ribosomal subunit protein bL32 (66 aa).

The span at 1–19 shows a compositional bias: basic residues; the sequence is MAIVPKRKTSKQRKHKRNT. Residues 1-21 are disordered; sequence MAIVPKRKTSKQRKHKRNTHS.

It belongs to the bacterial ribosomal protein bL32 family.

The sequence is that of Large ribosomal subunit protein bL32 from Mycoplasmopsis synoviae (strain 53) (Mycoplasma synoviae).